Consider the following 236-residue polypeptide: Leucyl/phenylalanyl-tRNA--protein transferase (236 aa).

This sequence belongs to the L/F-transferase family.

It is found in the cytoplasm. The enzyme catalyses N-terminal L-lysyl-[protein] + L-leucyl-tRNA(Leu) = N-terminal L-leucyl-L-lysyl-[protein] + tRNA(Leu) + H(+). It carries out the reaction N-terminal L-arginyl-[protein] + L-leucyl-tRNA(Leu) = N-terminal L-leucyl-L-arginyl-[protein] + tRNA(Leu) + H(+). The catalysed reaction is L-phenylalanyl-tRNA(Phe) + an N-terminal L-alpha-aminoacyl-[protein] = an N-terminal L-phenylalanyl-L-alpha-aminoacyl-[protein] + tRNA(Phe). Functionally, functions in the N-end rule pathway of protein degradation where it conjugates Leu, Phe and, less efficiently, Met from aminoacyl-tRNAs to the N-termini of proteins containing an N-terminal arginine or lysine. This is Leucyl/phenylalanyl-tRNA--protein transferase from Shewanella woodyi (strain ATCC 51908 / MS32).